Here is a 109-residue protein sequence, read N- to C-terminus: Putative transposase MJ0856.1 (109 aa).

Positions 36, 39, 62, and 65 each coordinate Zn(2+).

It belongs to the transposase 35 family.

This is Putative transposase MJ0856.1 from Methanocaldococcus jannaschii (strain ATCC 43067 / DSM 2661 / JAL-1 / JCM 10045 / NBRC 100440) (Methanococcus jannaschii).